A 502-amino-acid polypeptide reads, in one-letter code: Aspartyl/glutamyl-tRNA(Asn/Gln) amidotransferase subunit B (502 aa).

Belongs to the GatB/GatE family. GatB subfamily. As to quaternary structure, heterotrimer of A, B and C subunits.

The catalysed reaction is L-glutamyl-tRNA(Gln) + L-glutamine + ATP + H2O = L-glutaminyl-tRNA(Gln) + L-glutamate + ADP + phosphate + H(+). It carries out the reaction L-aspartyl-tRNA(Asn) + L-glutamine + ATP + H2O = L-asparaginyl-tRNA(Asn) + L-glutamate + ADP + phosphate + 2 H(+). Functionally, allows the formation of correctly charged Asn-tRNA(Asn) or Gln-tRNA(Gln) through the transamidation of misacylated Asp-tRNA(Asn) or Glu-tRNA(Gln) in organisms which lack either or both of asparaginyl-tRNA or glutaminyl-tRNA synthetases. The reaction takes place in the presence of glutamine and ATP through an activated phospho-Asp-tRNA(Asn) or phospho-Glu-tRNA(Gln). This is Aspartyl/glutamyl-tRNA(Asn/Gln) amidotransferase subunit B from Pseudarthrobacter chlorophenolicus (strain ATCC 700700 / DSM 12829 / CIP 107037 / JCM 12360 / KCTC 9906 / NCIMB 13794 / A6) (Arthrobacter chlorophenolicus).